The chain runs to 191 residues: MMVSCMGSLWVILSLILTLISGFSLMSSAWYKTDTISFGVFVHCIGPKNMPCNQTCIYYRTLEEIPDIFGKIAAVLLFGGWLLLSFGAVLVLSWTIIPVGLCQRRVCTPARYAQISAVVVTVLGLLVFPFNLHSEFARQICGSSFIYKSGDCCLGWGYMMAIVTVMLSCFLPFIGRYNLNEIKTKILLSKM.

Transmembrane regions (helical) follow at residues 6-26, 72-92, 112-132, and 154-174; these read MGSLWVILSLILTLISGFSLM, IAAVLLFGGWLLLSFGAVLVL, YAQISAVVVTVLGLLVFPFNL, and LGWGYMMAIVTVMLSCFLPFI.

The protein belongs to the TMEM211 family.

Its subcellular location is the membrane. The protein is LHFPL tetraspan subfamily member 7 protein (lhfpl7) of Xenopus tropicalis (Western clawed frog).